We begin with the raw amino-acid sequence, 324 residues long: Hydroxylase/desaturase CTB9 (324 aa).

Over residues 1–11 (MTSTITTTETL) the composition is skewed to polar residues. Disordered regions lie at residues 1 to 33 (MTST…KELP) and 288 to 308 (TARR…EPRA).

Belongs to the asaB hydroxylase/desaturase family.

It participates in mycotoxin biosynthesis. In terms of biological role, hydroxylase/desaturase; part of the gene cluster that mediates the biosynthesis of cercosporin, a light-activated, non-host-selective toxin. The perylenequinone chromophore of cercosporin absorbs light energy to attain an electronically-activated triplet state and produces active oxygen species such as the hydroxyl radical, superoxide, hydrogen peroxide or singlet oxygen upon reaction with oxygen molecules. These reactive oxygen species cause damage to various cellular components including lipids, proteins and nucleic acids. The first step of cercosporin biosynthesis is performed by the polyketide synthase CTB1 which catalyzes the formation of nor-toralactone. The starter unit acyltransferase (SAT) domain of CTB1 initiates polyketide extension by the selective utilization of acetyl-CoA, which is elongated to the heptaketide in the beta-ketoacyl synthase (KS) domain by successive condensations with six malonyl units introduced by the malonyl acyltransferase (MAT) domain. The product template (PT) domain catalyzes C4-C9 and C2-C11 aldol cyclizations and dehydrations to a trihydroxynaphthalene, which is thought to be delivered to the thioesterase (TE) domain for product release. The bifunctional enzyme CTB3 then methylates nor-toralactone to toralactone before conducting an unusual oxidative aromatic ring opening. The O-methyltransferase CTB2 further methylates the nascent OH-6 of the CBT3 product, blocking further oxidation at this site before the reductase CTB6 reduces the 2-oxopropyl ketone at position C7, giving naphthalene. The FAD-dependent monooxygenase CTB5 in concert with the multicopper oxidase CTB12 are responsible for homodimerization of naphthalene with CTB7 installing the dioxepine moiety, finally producing cercosporin. The fasciclin domain-containing protein CTB11 might act with CTB5 and CTB12 whereas the roles of CTB9 and CTB10 have still to be elucidated. This chain is Hydroxylase/desaturase CTB9, found in Cercospora beticola (Sugarbeet leaf spot fungus).